The chain runs to 246 residues: Mast cell protease 2 (246 aa).

Residues 1–19 form the signal peptide; the sequence is MHRPPLPLVLLLLCCRAQA. Residues 20-21 constitute a propeptide, activation peptide; the sequence is GE. Residues 22-244 enclose the Peptidase S1 domain; the sequence is IIGGTESKPH…YRPWIDEVLK (223 aa). A disulfide bridge connects residues C51 and C67. Active-site charge relay system residues include H66 and D109. N-linked (GlcNAc...) asparagine glycosylation occurs at N120. 2 disulfides stabilise this stretch: C143/C208 and C174/C187. S202 serves as the catalytic Charge relay system.

Belongs to the peptidase S1 family. Granzyme subfamily.

The protein localises to the secreted. It is found in the cytoplasmic granule. Functionally, putative mast cell chymase. The chain is Mast cell protease 2 from Ovis aries (Sheep).